The chain runs to 309 residues: Ribonuclease Z (309 aa).

Zn(2+)-binding residues include His63, His65, Asp67, His68, His145, Asp216, and His274. Catalysis depends on Asp67, which acts as the Proton acceptor.

Belongs to the RNase Z family. In terms of assembly, homodimer. The cofactor is Zn(2+).

It carries out the reaction Endonucleolytic cleavage of RNA, removing extra 3' nucleotides from tRNA precursor, generating 3' termini of tRNAs. A 3'-hydroxy group is left at the tRNA terminus and a 5'-phosphoryl group is left at the trailer molecule.. Zinc phosphodiesterase, which displays some tRNA 3'-processing endonuclease activity. Probably involved in tRNA maturation, by removing a 3'-trailer from precursor tRNA. The polypeptide is Ribonuclease Z (Streptococcus pneumoniae serotype 2 (strain D39 / NCTC 7466)).